An 825-amino-acid chain; its full sequence is Breast cancer anti-estrogen resistance protein 3 homolog (825 aa).

Alanine 2 bears the N-acetylalanine mark. Phosphoserine occurs at positions 32, 78, 83, 182, and 290. The segment at 40–84 (EAYPDVSIHGTLPRKKKGPPPIRSCDSASHMGTLPHSKSPRQSSP) is disordered. Residues 154–253 (WYHGRIPRQV…QSGAIIFQPI (100 aa)) enclose the SH2 domain. Residues 300 to 320 (DHSLPRGNLLRNKDKSGSQPA) form a disordered region. Lysine 334 bears the N6-methyllysine mark. Residues serine 358, serine 363, and serine 375 each carry the phosphoserine modification. An Omega-N-methylarginine modification is found at arginine 442. A Phosphoserine modification is found at serine 471. The Ras-GEF domain maps to 548 to 818 (DARVIAQHML…TALSRKLEPP (271 aa)). Residues 744 to 748 (LATAR) are mediates the interaction with BCAR1/p130CAS.

In terms of assembly, part of a complex comprised of PTPRA, BCAR1, BCAR3 and SRC; the formation of the complex is dependent on integrin mediated-tyrosine phosphorylation of PTPRA. Within the complex, interacts (via SH2 domain) with PTPRA (when phosphorylated on 'Tyr-792'). Interacts (via Ras-GEF domain) with BCAR1. Interacts (via Ras-GEF domain) with NEDD9. Interacts with PTK2/FAK1. Interacts with PTPN1. Interacts (via SH2 domain) with EGFR (when tyrosine-phosphorylated). In terms of processing, phosphorylated on tyrosine residues.

The protein localises to the cytoplasm. Its subcellular location is the cell junction. It localises to the focal adhesion. Functionally, acts as an adapter protein downstream of several growth factor receptors to promote cell proliferation, migration, and redistribution of actin fibers. Specifically involved in INS/insulin signaling pathway by mediating MAPK1/ERK2-MAPK3/ERK1 activation and DNA synthesis. Promotes insulin-mediated membrane ruffling. In response to vasoconstrictor peptide EDN1, involved in the activation of RAP1 downstream of PTK2B via interaction with phosphorylated BCAR1. Inhibits cell migration and invasion via regulation of TGFB-mediated matrix digestion, actin filament rearrangement, and inhibition of invadopodia activity. May inhibit TGFB/SMAD signaling, via facilitating BCAR1 and SMAD2 and/or SMAD3 interaction. Regulates EGF-induced DNA synthesis. Required for the maintenance of ocular lens morphology and structural integrity, potentially via regulation of focal adhesion complex signaling. Acts upstream of PTPRA to regulate the localization of BCAR1 and PTPRA to focal adhesions, via regulation of SRC-mediated phosphorylation of PTPRA. Positively regulates integrin-induced tyrosine phosphorylation of BCAR1. Acts as a guanine nucleotide exchange factor (GEF) for small GTPases RALA, RAP1A and RRAS. However, in a contrasting study, lacks GEF activity towards RAP1. The chain is Breast cancer anti-estrogen resistance protein 3 homolog from Rattus norvegicus (Rat).